The following is a 185-amino-acid chain: Ribosome-recycling factor (185 aa).

This sequence belongs to the RRF family.

It localises to the cytoplasm. Responsible for the release of ribosomes from messenger RNA at the termination of protein biosynthesis. May increase the efficiency of translation by recycling ribosomes from one round of translation to another. The chain is Ribosome-recycling factor from Wolbachia sp. subsp. Brugia malayi (strain TRS).